Here is a 147-residue protein sequence, read N- to C-terminus: Large ribosomal subunit protein uL15 (147 aa).

Residues 1–13 (MKLENLKSKEGSR) are compositionally biased toward basic and acidic residues. Residues 1–54 (MKLENLKSKEGSRHKTKRVGRGFGSGIGKTSTRGSKGQKSRKSGHTRPGFEGGQ) are disordered. A compositionally biased stretch (basic residues) spans 36–45 (KGQKSRKSGH).

The protein belongs to the universal ribosomal protein uL15 family. As to quaternary structure, part of the 50S ribosomal subunit.

In terms of biological role, binds to the 23S rRNA. The sequence is that of Large ribosomal subunit protein uL15 from Malacoplasma penetrans (strain HF-2) (Mycoplasma penetrans).